The primary structure comprises 672 residues: Nuclear RNA export factor 1 (672 aa).

2 disordered regions span residues 1-52 and 73-101; these read MPKR…SFKP and DEDDDMSDMTTAVKDRPTSRRRGSPIPRG. Residues 40 to 49 show a composition bias toward basic residues; it reads RKDRNKRRVS. The 81-residue stretch at 113 to 193 folds into the RRM domain; sequence WYQVTLQNAQ…PRVRSGIPLV (81 aa). LRR repeat units lie at residues 255–280, 281–304, 305–332, and 333–360; these read DLEALNLNDNSISSMEAFKGVEKRLP, NLKILYLGDNKIPSLAHLVVLRNL, SILELVLKNNPCRSRYKDSQQFISEVRR, and KFPKLVKLDGETLEPQITFDLSEQGRLL. The 155-residue stretch at 375–529 folds into the NTF2 domain; sequence VVRQFLDQYF…FCIRNETIFI (155 aa). Residues 541 to 564 are disordered; sequence KRSQHQPAPGAMPSTSSAVTSPQA. Polar residues predominate over residues 553–563; that stretch reads PSTSSAVTSPQ. Ser561 carries the post-translational modification Phosphoserine. The 55-residue stretch at 618 to 672 folds into the TAP-C domain; sequence STKMQMIEAMSAQSQMNVIWSRKCLEETNWDFNHAAFVFEKLFKENKIPPEAFMK.

It belongs to the NXF family. In terms of assembly, interacts with Nxt1. Interacts with ZC3H3. Forms a complex with Nup358/RanBP2, RanGAP and Nxt1. Interacts with Nup54 and Nup58. Interacts with Orc3 and Hpr1. Expressed ubiquitously.

It localises to the nucleus. The protein resides in the nucleoplasm. The protein localises to the cytoplasm. Its subcellular location is the nucleus envelope. Its function is as follows. Mediates the export of the majority of mRNAs from the nucleus to the cytoplasm. In ovarian follicle cells, plays a role in transposable element silencing regulation by enabling the nuclear export of flamenco (flam) transcripts and subsequent piRNA biogenesis. The chain is Nuclear RNA export factor 1 from Drosophila melanogaster (Fruit fly).